Consider the following 143-residue polypeptide: FAM161 homolog famh-136 (143 aa).

It belongs to the FAM136 family.

The protein resides in the cytoplasm. May play a role in locomotion and behavior. The protein is FAM161 homolog famh-136 of Caenorhabditis elegans.